Reading from the N-terminus, the 421-residue chain is Non-homologous end-joining factor LIF1 (421 aa).

The interaction with NEJ1 stretch occupies residues Met1–Leu196. The tract at residues Gly365–Thr421 is disordered. Residues Ala391–Pro409 are compositionally biased toward basic and acidic residues.

Belongs to the XRCC4-XLF family. XLF subfamily. Interacts with DNL4 (via BRCT domain). Interacts (via N-terminus) with NEJ1 (via C-terminus); the interaction is direct. The DNL4-LIF1 complex interacts with POL4.

The protein localises to the cytoplasm. The protein resides in the nucleus. In terms of biological role, involved in non-homologous repair of DNA double-strand breaks. Stabilizes DNL4. The protein is Non-homologous end-joining factor LIF1 (LIF1) of Saccharomyces cerevisiae (strain ATCC 204508 / S288c) (Baker's yeast).